The primary structure comprises 457 residues: Protein N-terminal amidase (457 aa).

The CN hydrolase domain occupies 19-453 (LKVLVIQLNP…EGAILREVQF (435 aa)). Catalysis depends on Glu63, which acts as the Proton acceptor. The Proton donor role is filled by Lys136. Cys187 functions as the Nucleophile in the catalytic mechanism.

This sequence belongs to the carbon-nitrogen hydrolase superfamily.

Functionally, deamidates N-terminal Asn and Gln. Component of a targeting complex in the N-end rule pathway. The polypeptide is Protein N-terminal amidase (NTA1) (Saccharomyces cerevisiae (strain ATCC 204508 / S288c) (Baker's yeast)).